Reading from the N-terminus, the 508-residue chain is Protoporphyrinogen oxidase 2, chloroplastic/mitochondrial (508 aa).

The N-terminal 22 residues, 1 to 22 (MASGAVADHQIEAVSGKRVAVV), are a transit peptide targeting the chloroplast and mitochondrion. FAD contacts are provided by residues 23-28 (GAGVSG), 46-47 (EA), and 68-71 (GANT). Residues 219–239 (KGGKSRDTKSSPGTKKGSRGS) form a disordered region. FAD-binding positions include V268 and 475–477 (LSV).

This sequence belongs to the protoporphyrinogen/coproporphyrinogen oxidase family. Protoporphyrinogen oxidase subfamily. Requires FAD as cofactor.

The protein localises to the plastid. The protein resides in the chloroplast. It localises to the mitochondrion. It catalyses the reaction protoporphyrinogen IX + 3 O2 = protoporphyrin IX + 3 H2O2. Its pathway is porphyrin-containing compound metabolism; protoporphyrin-IX biosynthesis; protoporphyrin-IX from protoporphyrinogen-IX: step 1/1. The protein operates within porphyrin-containing compound metabolism; chlorophyll biosynthesis. Catalyzes the 6-electron oxidation of protoporphyrinogen-IX to form protoporphyrin-IX. This chain is Protoporphyrinogen oxidase 2, chloroplastic/mitochondrial (PPOX2), found in Arabidopsis thaliana (Mouse-ear cress).